Reading from the N-terminus, the 110-residue chain is BolA-like protein 3 (110 aa).

The protein belongs to the BolA/IbaG family. In terms of assembly, interacts with NFU1.

It localises to the mitochondrion. Acts as a mitochondrial iron-sulfur (Fe-S) cluster assembly factor that facilitates (Fe-S) cluster insertion into a subset of mitochondrial proteins. Probably acts together with NFU1. This Mus musculus (Mouse) protein is BolA-like protein 3 (Bola3).